A 750-amino-acid polypeptide reads, in one-letter code: uncharacterized protein (750 aa).

The next 5 helical transmembrane spans lie at 2 to 22 (FVLL…TNVI), 33 to 53 (SLIL…DIFI), 79 to 99 (LLVL…VVSL), 116 to 136 (LSIF…TIML), and 143 to 163 (IQSL…SPIA). 2 disordered regions span residues 385–461 (DNKG…KKKE) and 571–651 (NKEF…PLTA). The segment covering 398-411 (ENTKGDDNSSEKTD) has biased composition (basic and acidic residues). A compositionally biased stretch (polar residues) spans 412-424 (TVSVSTKLKTTAD). A compositionally biased stretch (low complexity) spans 425 to 436 (QSESTQMSSEST). The segment covering 437-451 (ATGISSDPQSQGKMN) has biased composition (polar residues). The span at 452–461 (NKSEEQKKKE) shows a compositional bias: basic and acidic residues. The segment covering 618 to 629 (DSKGNTATNSDT) has biased composition (polar residues). A helical membrane pass occupies residues 724–744 (ATIVITLFLTVVLLAIAFFFF).

The protein to M.pneumoniae MPN_335.

Its subcellular location is the cell membrane. This is an uncharacterized protein from Mycoplasma pneumoniae (strain ATCC 29342 / M129 / Subtype 1) (Mycoplasmoides pneumoniae).